Consider the following 305-residue polypeptide: UDP-3-O-acyl-N-acetylglucosamine deacetylase (305 aa).

Zn(2+)-binding residues include H78, H237, and D241. H264 (proton donor) is an active-site residue.

This sequence belongs to the LpxC family. Requires Zn(2+) as cofactor.

It carries out the reaction a UDP-3-O-[(3R)-3-hydroxyacyl]-N-acetyl-alpha-D-glucosamine + H2O = a UDP-3-O-[(3R)-3-hydroxyacyl]-alpha-D-glucosamine + acetate. Its pathway is glycolipid biosynthesis; lipid IV(A) biosynthesis; lipid IV(A) from (3R)-3-hydroxytetradecanoyl-[acyl-carrier-protein] and UDP-N-acetyl-alpha-D-glucosamine: step 2/6. Functionally, catalyzes the hydrolysis of UDP-3-O-myristoyl-N-acetylglucosamine to form UDP-3-O-myristoylglucosamine and acetate, the committed step in lipid A biosynthesis. This Burkholderia ambifaria (strain ATCC BAA-244 / DSM 16087 / CCUG 44356 / LMG 19182 / AMMD) (Burkholderia cepacia (strain AMMD)) protein is UDP-3-O-acyl-N-acetylglucosamine deacetylase.